Reading from the N-terminus, the 343-residue chain is Multidrug resistance protein MdtN (343 aa).

The Cytoplasmic segment spans residues 1 to 12 (MESTPKKAPRSK). A helical; Signal-anchor for type II membrane protein transmembrane segment spans residues 13–33 (FPALLVVALALVALVFVIWRV). At 34 to 343 (DSAPSTNDAY…ASAVANLEPQ (310 aa)) the chain is on the periplasmic side.

Belongs to the membrane fusion protein (MFP) (TC 8.A.1) family. Could be part of a tripartite efflux system composed of MdtN, MdtO and MdtP.

Its subcellular location is the cell inner membrane. In terms of biological role, could be involved in resistance to puromycin, acriflavine and tetraphenylarsonium chloride. This chain is Multidrug resistance protein MdtN (mdtN), found in Shigella flexneri.